The chain runs to 382 residues: Cytochrome b (382 aa).

Helical transmembrane passes span 36-56, 80-101, 116-136, and 181-201; these read FGSLLALCLMIQILTGLFLTM, WLIRTIHANGASFFFICIYLHI, WFIGVIILFMLMATAFMGYVL, and FYTFHFLLPFIILMLTMIHLL. 2 residues coordinate heme b: His-86 and His-100. The heme b site is built by His-185 and His-199. His-204 contributes to the a ubiquinone binding site. 4 helical membrane passes run 229-249, 291-311, 323-343, and 350-370; these read YKDLIGFLILMMLLLMLTLSN, LGGVIALVMSILILIILPLTF, INQFMFWIFVMMVILLTWIGA, and YIITGQLLTILYFLYFILNPL.

This sequence belongs to the cytochrome b family. In terms of assembly, the main subunits of complex b-c1 are: cytochrome b, cytochrome c1 and the Rieske protein. Heme b is required as a cofactor.

Its subcellular location is the mitochondrion inner membrane. In terms of biological role, component of the ubiquinol-cytochrome c reductase complex (complex III or cytochrome b-c1 complex) that is part of the mitochondrial respiratory chain. The b-c1 complex mediates electron transfer from ubiquinol to cytochrome c. Contributes to the generation of a proton gradient across the mitochondrial membrane that is then used for ATP synthesis. The chain is Cytochrome b (MT-CYB) from Samia ricini (Indian eri silkmoth).